The chain runs to 256 residues: Phosphoribosylaminoimidazole-succinocarboxamide synthase (256 aa).

This sequence belongs to the SAICAR synthetase family.

It carries out the reaction 5-amino-1-(5-phospho-D-ribosyl)imidazole-4-carboxylate + L-aspartate + ATP = (2S)-2-[5-amino-1-(5-phospho-beta-D-ribosyl)imidazole-4-carboxamido]succinate + ADP + phosphate + 2 H(+). It functions in the pathway purine metabolism; IMP biosynthesis via de novo pathway; 5-amino-1-(5-phospho-D-ribosyl)imidazole-4-carboxamide from 5-amino-1-(5-phospho-D-ribosyl)imidazole-4-carboxylate: step 1/2. This Synechococcus sp. (strain JA-3-3Ab) (Cyanobacteria bacterium Yellowstone A-Prime) protein is Phosphoribosylaminoimidazole-succinocarboxamide synthase.